Reading from the N-terminus, the 2171-residue chain is Mediator of DNA damage checkpoint protein 1 (2171 aa).

Over residues 1–19 the composition is skewed to acidic residues; sequence MEDTQAIDWDVEEEEETEQ. The tract at residues 1 to 22 is disordered; that stretch reads MEDTQAIDWDVEEEEETEQSSE. Positions 1 to 150 are interaction with CHEK2; that stretch reads MEDTQAIDWD…SRGPLTVEET (150 aa). Residues 2-220 form an interaction with the MRN complex region; it reads EDTQAIDWDV…PFAFNLNSDT (219 aa). Thr4 is modified (phosphothreonine). Residues 54-105 enclose the FHA domain; the sequence is NVVGRMPDCSVALPFPSISKQHAEIEILAWDKAPILRDCGSLNGTQILRPPK. Position 108 is a phosphoserine (Ser108). The segment at 145 to 568 is required for nuclear localization (NLS1); it reads LTVEETPRVQ…PAKLLVVSLE (424 aa). Residue Thr146 is modified to Phosphothreonine. A phosphoserine mark is found at Ser168, Ser176, Ser196, and Ser218. Disordered regions lie at residues 185-248 and 261-317; these read RTTS…AKQS and DQPL…AEVH. Residue Thr220 is modified to Phosphothreonine. A compositionally biased stretch (basic and acidic residues) spans 261 to 278; sequence DQPLVKERDDDTKVKRGA. Position 299 is a phosphoserine (Ser299). Thr301 carries the post-translational modification Phosphothreonine. Residues 306 to 317 show a composition bias toward basic and acidic residues; the sequence is DSRPPGRPAEVH. A Phosphoserine modification is found at Ser329. Phosphothreonine is present on Thr331. Positions 355–387 are disordered; it reads GVGTRGPGAPGLAHLQESQAGSDTDVEEGKAPQ. Ser372 and Ser376 each carry phosphoserine. The residue at position 378 (Thr378) is a Phosphothreonine. 3 positions are modified to phosphoserine: Ser394, Ser397, and Ser402. A Phosphothreonine modification is found at Thr404. Phosphoserine is present on Ser411. Disordered stretches follow at residues 443 to 469 and 481 to 522; these read QRSQTTTERDSDTDVEEEELPVENREA and VRAH…VDIN. Thr449 carries the phosphothreonine modification. A Phosphoserine modification is found at Ser453. Thr455 carries the phosphothreonine modification. Residues Ser485, Ser495, Ser498, Ser504, Ser505, and Ser513 each carry the phosphoserine modification. Residues 513-522 are compositionally biased toward polar residues; it reads SQASTTVDIN. Residue Thr523 is modified to Phosphothreonine. The residue at position 590 (Ser590) is a Phosphoserine. Lys616 is covalently cross-linked (Glycyl lysine isopeptide (Lys-Gly) (interchain with G-Cter in SUMO1); alternate). Residue Lys616 forms a Glycyl lysine isopeptide (Lys-Gly) (interchain with G-Cter in SUMO2); alternate linkage. Disordered regions lie at residues 653-689 and 780-1969; these read DTLGESTQPQREGAQVPTGREREQHVGGTKDSEDNYG and SPPR…TKLN. The segment covering 671 to 685 has biased composition (basic and acidic residues); it reads GREREQHVGGTKDSE. Phosphoserine is present on residues Ser780 and Ser793. Residue Lys812 is modified to N6-acetyllysine. Basic and acidic residues-rich tracts occupy residues 819–844, 851–862, 868–905, and 914–951; these read ETAERVGPERGPLERETEKLLPERQT, ELTKGKQDREQK, DTQRQESDKNGESASPERDRESLKVEIETSEEIQEKQV, and AFEREVERPVANRECDPAELEEKVPKVILERDTQRGEP. 2 positions are modified to phosphoserine: Ser955 and Ser998. Residues 955 to 964 show a composition bias toward polar residues; sequence SQDQKGQASS. Basic and acidic residues predominate over residues 1016–1031; that stretch reads KASRIRAAEKVSRGDQ. At Ser1033 the chain carries Phosphoserine. Positions 1040 to 1051 are enriched in pro residues; the sequence is PTVPEAPAPPQK. Phosphoserine is present on residues Ser1068 and Ser1086. Over residues 1103-1113 the composition is skewed to basic residues; it reads PKPKIRTRKSS. 2 stretches are compositionally biased toward polar residues: residues 1129–1157 and 1170–1187; these read PSTSTAQPVTPKPTSQATRSRTNRSSVKT and PCTSTDQPVTSEPTSQVT. The interval 1148 to 1692 is interaction with the PRKDC complex; that stretch reads SRTNRSSVKT…TNRSSVKTPE (545 aa). Thr1157 bears the Phosphothreonine mark. Thr1198 bears the Phosphothreonine mark. The segment covering 1210-1227 has biased composition (polar residues); that stretch reads QPSTSTDRPVTSEPTSHA. The residue at position 1235 (Ser1235) is a Phosphoserine. Thr1239 carries the phosphothreonine modification. Residues 1251–1268 are compositionally biased toward polar residues; the sequence is QPSTSTDQPVTSEPTYQA. Residues Thr1280 and Thr1302 each carry the phosphothreonine modification. The segment covering 1306–1318 has biased composition (low complexity); sequence TSRTTRSRTNMSS. Polar residues-rich tracts occupy residues 1334 to 1350 and 1375 to 1403; these read PSTSTEQPVTPEPTSRA and PSTSTDQPVTPEPTSQATRGRTNRSSVKT. Residues 1429 to 1441 show a composition bias toward low complexity; sequence TSRTTRSRTNMSS. A compositionally biased stretch (polar residues) spans 1457-1473; the sequence is PSTSTEQPVTPEPTSRA. Phosphoserine occurs at positions 1481 and 1482. Lys1484 bears the N6-acetyllysine mark. The residue at position 1485 (Thr1485) is a Phosphothreonine. Lys1495 is covalently cross-linked (Glycyl lysine isopeptide (Lys-Gly) (interchain with G-Cter in SUMO1); alternate). Lys1495 is covalently cross-linked (Glycyl lysine isopeptide (Lys-Gly) (interchain with G-Cter in SUMO2); alternate). 3 stretches are compositionally biased toward polar residues: residues 1498-1526, 1538-1557, and 1580-1596; these read PSTSTDQPVTPEPTSQATRGRTNRSSVKT, QPSTSTDQPVTPEPTSQVTR, and ASASTDQPVTSEPTSRT. Phosphothreonine occurs at positions 1507 and 1548. 2 positions are modified to phosphothreonine: Thr1615 and Thr1630. 2 stretches are compositionally biased toward polar residues: residues 1620 to 1649 and 1661 to 1678; these read QPSTSTDQPVTPEPTSQATRGRTNRSSVKT and QPSTSRNQLVTPEPTSRA. A Phosphoserine modification is found at Ser1646. Phosphothreonine is present on residues Thr1649 and Thr1671. Ser1686 carries the phosphoserine modification. Thr1690 bears the Phosphothreonine mark. Residues 1693 to 1702 show a composition bias toward pro residues; the sequence is PVVPTAPEPH. Residues 1706–1718 are compositionally biased toward polar residues; that stretch reads STDQPVTPKLTSR. Thr1712, Thr1746, and Thr1753 each carry phosphothreonine. Positions 1760 to 1771 are enriched in polar residues; it reads GGQSKTLRSSTV. Ser1763 is modified (phosphoserine). A Phosphothreonine modification is found at Thr1779. A compositionally biased stretch (polar residues) spans 1780–1801; sequence PEFQSPVTTDQPISPEPITQPS. Residues 1780–2171 are required for nuclear localization (NLS2); sequence PEFQSPVTTD…VLSPLEMSST (392 aa). Residues Ser1784 and Ser1793 each carry the phosphoserine modification. Residue Lys1822 forms a Glycyl lysine isopeptide (Lys-Gly) (interchain with G-Cter in SUMO2) linkage. A Phosphoserine modification is found at Ser1857. A Glycyl lysine isopeptide (Lys-Gly) (interchain with G-Cter in SUMO2) cross-link involves residue Lys1872. Thr1882 carries the phosphothreonine modification. Ser1902 carries the post-translational modification Phosphoserine. Positions 1905-1918 are enriched in polar residues; it reads HQKQPQRGEVSQKT. A Glycyl lysine isopeptide (Lys-Gly) (interchain with G-Cter in SUMO1); alternate cross-link involves residue Lys1922. Lys1922 participates in a covalent cross-link: Glycyl lysine isopeptide (Lys-Gly) (interchain with G-Cter in SUMO2); alternate. Positions 1929-1939 are enriched in basic and acidic residues; that stretch reads AEKPGKEEDVV. Thr1940 carries the phosphothreonine modification. BRCT domains lie at 1974-2052 and 2073-2164; these read APKV…EYVV and RERR…FVLS. An Omega-N-methylarginine modification is found at Arg2025.

Homodimer. Interacts with H2AX, which requires phosphorylation of H2AX on 'Ser-139'. Interacts with the MRN complex, composed of MRE11, RAD50, and NBN. Interacts with CHEK2, which requires ATM-mediated phosphorylation of 'Thr-68' within the FHA domain of CHEK2. Interacts constitutively with the BRCA1-BARD1 complex, SMC1A and TP53BP1. Interacts with ATM and FANCD2, and these interactions are reduced upon DNA damage. Also interacts with the PRKDC complex, composed of XRCC6/KU70, XRCC5/KU80 and PRKDC/XRCC7. This interaction may be required for PRKDC autophosphorylation, which is essential for DNA double strand break (DSB) repair. When phosphorylated by ATM, interacts with RNF8 (via FHA domain). Interacts with CEP164. When phosphorylated, interacts with APTX (via FHA-like domain). Interacts (when phosphorylated) with TOPBP1; promoting TOPBP1 localization to DNA damage sites during mitosis. Interacts (when phosphorylated) with NBN; promoting NBN and MRN complex localization to DNA damage sites. Post-translationally, phosphorylated upon exposure to ionizing radiation (IR), ultraviolet radiation (UV), and hydroxyurea (HU). Phosphorylation in response to IR requires ATM, NBN, and possibly CHEK2. Also phosphorylated during the G2/M phase of the cell cycle and during activation of the mitotic spindle checkpoint. Phosphorylation at Thr-4 by ATM stabilizes and enhances homodimerization via the FHA domain. Phosphorylated at Ser-168 and Ser-196 by CK2 in response to DNA damage during mitosis, promoting interaction with TOPBP1. Phosphorylated by CK2 in response to DNA damage, promoting interaction with NBN and recruitment of the MRN complex to DNA damage sites. Sumoylation at Lys-1922 by PIAS4 following DNA damage promotes ubiquitin-mediated degradation. In terms of processing, ubiquitinated by RNF4, leading to proteasomal degradation; undergoes 'Lys-48'-linked polyubiquitination.

The protein resides in the nucleus. It localises to the chromosome. Functionally, histone reader protein required for checkpoint-mediated cell cycle arrest in response to DNA damage within both the S phase and G2/M phases of the cell cycle. Specifically recognizes and binds histone H2AX phosphorylated at 'Ser-139', a marker of DNA damage, serving as a scaffold for the recruitment of DNA repair and signal transduction proteins to discrete foci of DNA damage sites. Also required for downstream events subsequent to the recruitment of these proteins. These include phosphorylation and activation of the ATM, CHEK1 and CHEK2 kinases, and stabilization of TP53/p53 and apoptosis. ATM and CHEK2 may also be activated independently by a parallel pathway mediated by TP53BP1. Required for chromosomal stability during mitosis by promoting recruitment of TOPBP1 to DNA double strand breaks (DSBs): TOPBP1 forms filamentous assemblies that bridge MDC1 and tether broken chromosomes during mitosis. Required for the repair of DSBs via homologous recombination by promoting recruitment of NBN component of the MRN complex to DSBs. This chain is Mediator of DNA damage checkpoint protein 1 (MDC1), found in Pan troglodytes (Chimpanzee).